Consider the following 293-residue polypeptide: Energy-coupling factor transporter ATP-binding protein EcfA2 (293 aa).

The region spanning 3–246 (ITFQKVEHRY…ADELEKIGVD (244 aa)) is the ABC transporter domain. Residue 40-47 (GHTGSGKS) coordinates ATP.

It belongs to the ABC transporter superfamily. Energy-coupling factor EcfA family. As to quaternary structure, forms a stable energy-coupling factor (ECF) transporter complex composed of 2 membrane-embedded substrate-binding proteins (S component), 2 ATP-binding proteins (A component) and 2 transmembrane proteins (T component).

Its subcellular location is the cell membrane. In terms of biological role, ATP-binding (A) component of a common energy-coupling factor (ECF) ABC-transporter complex. Unlike classic ABC transporters this ECF transporter provides the energy necessary to transport a number of different substrates. This chain is Energy-coupling factor transporter ATP-binding protein EcfA2, found in Bacillus thuringiensis (strain Al Hakam).